A 383-amino-acid polypeptide reads, in one-letter code: Cathepsin D (383 aa).

The signal sequence occupies residues 1–18; it reads MKLLILTLFLATIVLAQA. Residues 19 to 48 constitute a propeptide that is removed on maturation; the sequence is LTVPLNFHQASRESRRRVPQKWSNRLSALN. A Peptidase A1 domain is found at 63 to 378; it reads YYGAITIGTP…DFGNKQVGFA (316 aa). Asp-81 is an active-site residue. A disulfide bond links Cys-94 and Cys-101. N-linked (GlcNAc...) asparagine glycosylation is found at Asn-118 and Asn-238. An intrachain disulfide couples Cys-259 to Cys-263. Asp-268 is an active-site residue. Cys-302 and Cys-339 are joined by a disulfide. An N-linked (GlcNAc...) asparagine glycan is attached at Asn-310.

This sequence belongs to the peptidase A1 family. As to quaternary structure, monomer. N-glycosylated on 2 out of the 3 potential sites. Glycans contain sulfated Mannose.

It is found in the lysosome. It localises to the secreted. It carries out the reaction Specificity similar to, but narrower than, that of pepsin A. Does not cleave the 4-Gln-|-His-5 bond in B chain of insulin.. Its function is as follows. Protease that may act during cell growth and/or development. The polypeptide is Cathepsin D (ctsD) (Dictyostelium discoideum (Social amoeba)).